The chain runs to 448 residues: Lipoamide acyltransferase component of branched-chain alpha-keto acid dehydrogenase complex, mitochondrial (448 aa).

Residues 30 to 105 form the Lipoyl-binding domain; sequence VVQFKLSDIG…RVGQALIDVE (76 aa). An N6-lipoyllysine modification is found at Lys-71. 2 disordered regions span residues 108–146 and 191–211; these read GNVE…GKVL and TSGS…SKSY. Residues 121–136 show a composition bias toward low complexity; it reads ASSSPEAPKSSAPKAP. In terms of domain architecture, Peripheral subunit-binding (PSBD) spans 146 to 183; the sequence is LATPAVRRIAIENKIKLAEVRGTGKDGRVLKEDVLKFL. The segment covering 191-210 has biased composition (polar residues); that stretch reads TSGSTNIRTTHQAPQPSSKS. CoA-binding residues include Arg-257, Ser-272, Asp-315, Ser-365, Asn-366, Gly-390, and Ile-392. Active-site residues include His-418 and Asp-422.

This sequence belongs to the 2-oxoacid dehydrogenase family. It depends on (R)-lipoate as a cofactor. As to expression, ubiquitously expressed.

It localises to the mitochondrion matrix. The protein localises to the cytoplasm. Its subcellular location is the cytosol. It is found in the cell projection. The protein resides in the dendrite. It localises to the cilium. It carries out the reaction N(6)-[(R)-dihydrolipoyl]-L-lysyl-[protein] + 2-methylpropanoyl-CoA = N(6)-[(R)-S(8)-2-methylpropanoyldihydrolipoyl]-L-lysyl-[protein] + CoA. Functionally, the branched-chain alpha-keto dehydrogenase complex catalyzes the overall conversion of alpha-keto acids to acyl-CoA and CO(2). It contains multiple copies of three enzymatic components: branched-chain alpha-keto acid decarboxylase (E1), lipoamide acyltransferase (E2) and lipoamide dehydrogenase (E3). Within this complex, the catalytic function of this enzyme is to accept, and to transfer to coenzyme A, acyl groups that are generated by the branched-chain alpha-keto acid decarboxylase component. Required for the catabolism of branched-chain amino acids and the subsequent synthesis of monomethyl branched-chain fatty acids, which are important for regulating postembryonic growth. The sequence is that of Lipoamide acyltransferase component of branched-chain alpha-keto acid dehydrogenase complex, mitochondrial from Caenorhabditis elegans.